A 1079-amino-acid chain; its full sequence is Alpha-mannosidase C (1079 aa).

Positions 1–22 are cleaved as a signal peptide; it reads MFYKTFGFLFIYLIILISGTLS. Zn(2+) contacts are provided by histidine 44 and aspartate 46. N-linked (GlcNAc...) asparagine glycans are attached at residues asparagine 60 and asparagine 96. Aspartate 158 contributes to the Zn(2+) binding site. The active-site Nucleophile is aspartate 158. Residues asparagine 192, asparagine 222, asparagine 248, and asparagine 467 are each glycosylated (N-linked (GlcNAc...) asparagine). Histidine 475 contributes to the Zn(2+) binding site. N-linked (GlcNAc...) asparagine glycosylation is found at asparagine 516, asparagine 527, asparagine 589, asparagine 760, asparagine 769, asparagine 848, asparagine 872, asparagine 912, asparagine 1040, and asparagine 1057.

The protein belongs to the glycosyl hydrolase 38 family. Zn(2+) is required as a cofactor.

It localises to the secreted. It carries out the reaction Hydrolysis of terminal, non-reducing alpha-D-mannose residues in alpha-D-mannosides.. In Dictyostelium discoideum (Social amoeba), this protein is Alpha-mannosidase C (manC).